We begin with the raw amino-acid sequence, 732 residues long: Polyribonucleotide nucleotidyltransferase (732 aa).

Residues D483 and D489 each coordinate Mg(2+). The KH domain maps to 550–609; that stretch reads PRIVTVQIPVDKIGELIGPKGKNIRGIQDETGAELSVEDDGTVTIAAVGGDSMERAKQMV. Residues 619–687 enclose the S1 motif domain; the sequence is GETYEGTVKT…ERGRLRLSMK (69 aa). The segment at 684–732 is disordered; sequence LSMKALLPKPEGMPDEPPQSERPRRDDGERSGGDRGGRGGRNGGGRDRR. Over residues 702-720 the composition is skewed to basic and acidic residues; that stretch reads QSERPRRDDGERSGGDRGG.

It belongs to the polyribonucleotide nucleotidyltransferase family. It depends on Mg(2+) as a cofactor.

The protein localises to the cytoplasm. It carries out the reaction RNA(n+1) + phosphate = RNA(n) + a ribonucleoside 5'-diphosphate. In terms of biological role, involved in mRNA degradation. Catalyzes the phosphorolysis of single-stranded polyribonucleotides processively in the 3'- to 5'-direction. This Gemmatimonas aurantiaca (strain DSM 14586 / JCM 11422 / NBRC 100505 / T-27) protein is Polyribonucleotide nucleotidyltransferase.